We begin with the raw amino-acid sequence, 355 residues long: 3-dehydroquinate synthase (355 aa).

Residues 71–76, 105–109, 129–130, Lys142, and Lys151 each bind NAD(+); these read EGEASK, GVVGD, and TS. Zn(2+) contacts are provided by Glu184, His246, and His263.

It belongs to the sugar phosphate cyclases superfamily. Dehydroquinate synthase family. Requires Co(2+) as cofactor. The cofactor is Zn(2+). It depends on NAD(+) as a cofactor.

It is found in the cytoplasm. It carries out the reaction 7-phospho-2-dehydro-3-deoxy-D-arabino-heptonate = 3-dehydroquinate + phosphate. It functions in the pathway metabolic intermediate biosynthesis; chorismate biosynthesis; chorismate from D-erythrose 4-phosphate and phosphoenolpyruvate: step 2/7. Functionally, catalyzes the conversion of 3-deoxy-D-arabino-heptulosonate 7-phosphate (DAHP) to dehydroquinate (DHQ). The protein is 3-dehydroquinate synthase of Streptococcus thermophilus (strain CNRZ 1066).